The sequence spans 507 residues: Tabersonine/lochnericine 19-hydroxylase (507 aa).

A helical membrane pass occupies residues 8–28 (FFVLLLPFFIGIAFIYKLWNF). N-linked (GlcNAc...) asparagine glycosylation occurs at Asn167. Cys447 lines the heme pocket.

It belongs to the cytochrome P450 family. Heme is required as a cofactor. As to expression, confined to roots.

The protein resides in the endoplasmic reticulum membrane. The catalysed reaction is (-)-tabersonine + reduced [NADPH--hemoprotein reductase] + O2 = (-)-(R)-19-hydroxytabersonine + oxidized [NADPH--hemoprotein reductase] + H2O + H(+). It carries out the reaction lochnericine + reduced [NADPH--hemoprotein reductase] + O2 = horhammericine + oxidized [NADPH--hemoprotein reductase] + H2O + H(+). It catalyses the reaction (-)-vincadifformine + reduced [NADPH--hemoprotein reductase] + O2 = (-)-minovincinine + oxidized [NADPH--hemoprotein reductase] + H2O + H(+). It participates in alkaloid biosynthesis. Its function is as follows. Component of the monoterpenoid indole alkaloids (MIAs, e.g. echitovenine, tabersonine, lochnericine, 19-hydroxytabersonine and horhammericine) biosynthetic pathway; MIAs are used in cancer treatment and other medical applications. Cytochrome P450 catalyzing the conversion of (-)-tabersonine to 19-hydroxytabersonine, of lochnericine to horhammericine and of (-)-vincadifformine to (-)-minovincinine. The sequence is that of Tabersonine/lochnericine 19-hydroxylase from Catharanthus roseus (Madagascar periwinkle).